Consider the following 430-residue polypeptide: Gamma-glutamyl phosphate reductase (430 aa).

The protein belongs to the gamma-glutamyl phosphate reductase family.

The protein localises to the cytoplasm. The catalysed reaction is L-glutamate 5-semialdehyde + phosphate + NADP(+) = L-glutamyl 5-phosphate + NADPH + H(+). Its pathway is amino-acid biosynthesis; L-proline biosynthesis; L-glutamate 5-semialdehyde from L-glutamate: step 2/2. Its function is as follows. Catalyzes the NADPH-dependent reduction of L-glutamate 5-phosphate into L-glutamate 5-semialdehyde and phosphate. The product spontaneously undergoes cyclization to form 1-pyrroline-5-carboxylate. The polypeptide is Gamma-glutamyl phosphate reductase (Psychrobacter arcticus (strain DSM 17307 / VKM B-2377 / 273-4)).